We begin with the raw amino-acid sequence, 648 residues long: MKNSAAIFLTSSLILLLQTLHGVKAGFICVGSSFPTNSSYQKNRDSLFSTLSDKVTTNGGFYNASLDGVHVVGLCRRDYDRQGCINCVEESIRQIKTSCSNRVQSFHCNSDDRERVSCLVRTTDQSTYRILELGPATNDPSPVAIDTFAKNMTLFRQEWEAMVDRTLEAVTIDNSTTVLKYYGALKSEFSEFPNVYMMMQCTPDINSGACKRCLQASVTYFRDQNWGRQGGGICRPSCVFRWEFYPFYGAFANVTRVPAPPRALIPRTEAISITRLKGGIIAIFVVPIVINLLVFIGLIRAYTRIRKSYNGINEAQYDYGGQSKLRFDFRMILTATDDFSFENKIGQGGFGSVYKGKLPGGEEIAVKRLTRGSGQGEIEFRNEVLLLTRLQHRNLVKLLGFCNEGDEEILVYEFVPNSSLDHFIFDEEKRLLLTWDMRARIIEGVARGLVYLHEDSQLRIIHRDLKASNILLDAYMNPKVADFGMARLFNMDQTRAVTRKVVGTFGYMAPEYVRNRTFSVKTDVYSFGVVLLEMITGRSNKNYFEALGLPAYAWKCWVAGEAASIIDHVLSRSRSNEIMRFIHIGLLCVQENVSKRPTMSLVIQWLGSETIAIPLPTVAGFTNASYQAEHEAGTLSLNELSITELSPR.

Residues 1-25 (MKNSAAIFLTSSLILLLQTLHGVKA) form the signal peptide. Gnk2-homologous domains are found at residues 26–127 (GFIC…DQST) and 140–247 (PSPV…FYPF). The Extracellular segment spans residues 26–278 (GFICVGSSFP…EAISITRLKG (253 aa)). N-linked (GlcNAc...) asparagine glycans are attached at residues N37, N63, N151, N174, and N253. The chain crosses the membrane as a helical span at residues 279–299 (GIIAIFVVPIVINLLVFIGLI). The Cytoplasmic segment spans residues 300 to 648 (RAYTRIRKSY…ELSITELSPR (349 aa)). The Protein kinase domain maps to 339 to 611 (FSFENKIGQG…VIQWLGSETI (273 aa)). Residues 345–353 (IGQGGFGSV) and K367 each bind ATP. Y412 bears the Phosphotyrosine mark. D464 (proton acceptor) is an active-site residue. The residue at position 468 (S468) is a Phosphoserine. T504 carries the phosphothreonine modification. Position 512 is a phosphotyrosine (Y512).

The protein belongs to the protein kinase superfamily. Ser/Thr protein kinase family. CRK subfamily.

It is found in the membrane. The enzyme catalyses L-seryl-[protein] + ATP = O-phospho-L-seryl-[protein] + ADP + H(+). The catalysed reaction is L-threonyl-[protein] + ATP = O-phospho-L-threonyl-[protein] + ADP + H(+). In Arabidopsis thaliana (Mouse-ear cress), this protein is Cysteine-rich receptor-like protein kinase 38 (CRK38).